The following is a 207-amino-acid chain: Outer-membrane lipoprotein LolB (207 aa).

Residues 1–21 (MPLPDFRLIRLLPLASLVLTA) form the signal peptide. Residue cysteine 22 is the site of N-palmitoyl cysteine attachment. The S-diacylglycerol cysteine moiety is linked to residue cysteine 22.

The protein belongs to the LolB family. As to quaternary structure, monomer.

It is found in the cell outer membrane. Its function is as follows. Plays a critical role in the incorporation of lipoproteins in the outer membrane after they are released by the LolA protein. This Escherichia fergusonii (strain ATCC 35469 / DSM 13698 / CCUG 18766 / IAM 14443 / JCM 21226 / LMG 7866 / NBRC 102419 / NCTC 12128 / CDC 0568-73) protein is Outer-membrane lipoprotein LolB.